We begin with the raw amino-acid sequence, 853 residues long: MCKSLVIVESPVKAKTISKYLGKQYIVKSSVGHVRDLINNKSKNKKNIKKSNIKHNEKTALIQQMGINPYKNWKAEYHILPGKEKIISELKNIANKVHYIYLATDLDREGEAIAWHLKEVIGGNSLKFRRVVFNEITKKSIEKAFQNIGKINMNRVYSQQARRFMDRIVGYMISPLLWKKISRGLSAGRVQSAAVRLITDREYEIKNFIEREHWKISLSLLSKENKKVTMDITHYRNKTFLLNNKKEVNSTIEKIKNLSFIITDRKDKIFKKKPPAPLITSTLQQASNIDLGFSVKKTMFLAQKLYEQGYITYIRTDSYFLSNYAIEKVRSYIENFYGSDFLPKKSNIYSNQKYSQEAHEAIRPSDVQVVNIDNCDPDAKKLYKLIWNYFIASQMKSERYKSIKTTVMADVFKLQSNTKIVLFSGWTKILKKSNNVNFKFPVLDIGTTLILDKILPHQIFTKPPPRFSESSLVRELEKKGIGRPSTYATIITKIKEKGYLKIKKNKFYAAKIGEILITRLKKNFSDLVDYDFTARMEKNLDQVSDKLINWKHLLNSFFDNFSQQLEQAKKPPEEGGMELNTTVPTEIDCSLCNKKMGIKTAVTGVFLSCLGYNSEPNEKRCKNTINLISLNDLSTTKKEEKNFHLKNRCKKCNLVMDVYLINENLKIFICINNPSCNGYNLKKGIFKKSLNCSLKKIKCEKCKNDMLFKTGRFGNFFMCINDTCKNTRKILPNGEISEPKFEPIPFPDILCEKSNTWFVLREGISGIFFAANTFPKSRETRSPFVEELARFEYLLPKKLHYLASAPQRDNKGNKTIVCFNKLNKQQYIASKKEGKFTGWAAFFIDRKWCIVNK.

Positions 3-136 (KSLVIVESPV…KFRRVVFNEI (134 aa)) constitute a Toprim domain. Positions 9 and 105 each coordinate Mg(2+). One can recognise a Topo IA-type catalytic domain in the interval 152–565 (NMNRVYSQQA…SFFDNFSQQL (414 aa)). The tract at residues 186–191 (SAGRVQ) is interaction with DNA. Tyr313 functions as the O-(5'-phospho-DNA)-tyrosine intermediate in the catalytic mechanism. C4-type zinc fingers lie at residues 589–621 (CSLCNKKMGIKTAVTGVFLSCLGYNSEPNEKRC), 649–676 (CKKCNLVMDVYLINENLKIFICINNPSC), and 699–724 (CEKCKNDMLFKTGRFGNFFMCINDTC).

This sequence belongs to the type IA topoisomerase family. In terms of assembly, monomer. Mg(2+) serves as cofactor.

The enzyme catalyses ATP-independent breakage of single-stranded DNA, followed by passage and rejoining.. Releases the supercoiling and torsional tension of DNA, which is introduced during the DNA replication and transcription, by transiently cleaving and rejoining one strand of the DNA duplex. Introduces a single-strand break via transesterification at a target site in duplex DNA. The scissile phosphodiester is attacked by the catalytic tyrosine of the enzyme, resulting in the formation of a DNA-(5'-phosphotyrosyl)-enzyme intermediate and the expulsion of a 3'-OH DNA strand. The free DNA strand then undergoes passage around the unbroken strand, thus removing DNA supercoils. Finally, in the religation step, the DNA 3'-OH attacks the covalent intermediate to expel the active-site tyrosine and restore the DNA phosphodiester backbone. The protein is DNA topoisomerase 1 of Buchnera aphidicola subsp. Schizaphis graminum (strain Sg).